A 283-amino-acid chain; its full sequence is uncharacterized protein (283 aa).

4 helical membrane passes run 11–31 (LFAY…YVSA), 35–55 (EGAL…WFGP), 56–76 (IYAL…MMFF), and 93–113 (LVVW…IHDI). One can recognise a GGDEF domain in the interval 162 to 283 (NSFVFLLLHM…LENEMMMNEL (122 aa)).

Its subcellular location is the cell membrane. This is an uncharacterized protein from Bacillus subtilis (strain 168).